Here is a 246-residue protein sequence, read N- to C-terminus: Large ribosomal subunit protein uL3 (246 aa).

N5-methylglutamine is present on Gln151.

This sequence belongs to the universal ribosomal protein uL3 family. Part of the 50S ribosomal subunit. Forms a cluster with proteins L14 and L19. In terms of processing, methylated by PrmB.

Its function is as follows. One of the primary rRNA binding proteins, it binds directly near the 3'-end of the 23S rRNA, where it nucleates assembly of the 50S subunit. The chain is Large ribosomal subunit protein uL3 from Bartonella bacilliformis (strain ATCC 35685 / KC583 / Herrer 020/F12,63).